A 328-amino-acid polypeptide reads, in one-letter code: D-cysteine desulfhydrase (328 aa).

Lys-51 carries the post-translational modification N6-(pyridoxal phosphate)lysine.

Belongs to the ACC deaminase/D-cysteine desulfhydrase family. In terms of assembly, homodimer. Requires pyridoxal 5'-phosphate as cofactor.

The enzyme catalyses D-cysteine + H2O = hydrogen sulfide + pyruvate + NH4(+) + H(+). In terms of biological role, catalyzes the alpha,beta-elimination reaction of D-cysteine and of several D-cysteine derivatives. It could be a defense mechanism against D-cysteine. In Salmonella schwarzengrund (strain CVM19633), this protein is D-cysteine desulfhydrase.